Consider the following 453-residue polypeptide: Pre-mRNA-splicing factor prp46 (453 aa).

The segment covering 62-71 (EKQAKAAAAG) has biased composition (low complexity). A disordered region spans residues 62–129 (EKQAKAAAAG…PSATRQQRPD (68 aa)). WD repeat units follow at residues 142–181 (GHLG…LRLT), 184–223 (GHIS…VIRH), 226–265 (GHLS…NIHV), 268–309 (GHKG…GVLT), 311–350 (HKKG…QNFE), 351–389 (GHNA…KFQS), and 400–439 (DAEA…TPES). The tract at residues 432 to 453 (DDEATPESHPVTWAPTLGRQRY) is disordered.

Belongs to the WD repeat PRL1/PRL2 family. In terms of assembly, associated with the spliceosome.

The protein localises to the cytoplasm. The protein resides in the nucleus. Its function is as follows. Involved in pre-mRNA splicing and required for cell cycle progression at G2/M. The protein is Pre-mRNA-splicing factor prp46 (prp46) of Aspergillus fumigatus (strain ATCC MYA-4609 / CBS 101355 / FGSC A1100 / Af293) (Neosartorya fumigata).